We begin with the raw amino-acid sequence, 102 residues long: FGSLLGLCLATQILTGLFLAMHYTSDISTAFSSVTHICRDVNYGWLIRNIHANGASFFFICIYLHIGRGLYYGSYLYKETWNIGVVLLLLVMMTAFVGYVLP.

3 helical membrane-spanning segments follow: residues 1-21, 45-66, and 81-101; these read FGSL…FLAM, WLIR…YLHI, and WNIG…GYVL. The heme b site is built by His-51 and His-65.

It belongs to the cytochrome b family. In terms of assembly, the cytochrome bc1 complex contains 3 respiratory subunits (MT-CYB, CYC1 and UQCRFS1), 2 core proteins (UQCRC1 and UQCRC2) and probably 6 low-molecular weight proteins. Heme b serves as cofactor.

It is found in the mitochondrion inner membrane. Component of the ubiquinol-cytochrome c reductase complex (complex III or cytochrome b-c1 complex) that is part of the mitochondrial respiratory chain. The b-c1 complex mediates electron transfer from ubiquinol to cytochrome c. Contributes to the generation of a proton gradient across the mitochondrial membrane that is then used for ATP synthesis. The chain is Cytochrome b (mt-cyb) from Megalops atlanticus (Tarpon).